The sequence spans 471 residues: Glutamate--tRNA ligase (471 aa).

Positions 9-19 (PSPTGYLHVGG) match the 'HIGH' region motif. Zn(2+) is bound by residues cysteine 98, cysteine 100, cysteine 125, and histidine 127. Residues 237 to 241 (KLSKR) carry the 'KMSKS' region motif. Lysine 240 serves as a coordination point for ATP.

It belongs to the class-I aminoacyl-tRNA synthetase family. Glutamate--tRNA ligase type 1 subfamily. In terms of assembly, monomer. The cofactor is Zn(2+).

Its subcellular location is the cytoplasm. It catalyses the reaction tRNA(Glu) + L-glutamate + ATP = L-glutamyl-tRNA(Glu) + AMP + diphosphate. Its function is as follows. Catalyzes the attachment of glutamate to tRNA(Glu) in a two-step reaction: glutamate is first activated by ATP to form Glu-AMP and then transferred to the acceptor end of tRNA(Glu). The protein is Glutamate--tRNA ligase of Escherichia coli O9:H4 (strain HS).